A 613-amino-acid chain; its full sequence is Dihydroxy-acid dehydratase (613 aa).

Asp81 contributes to the Mg(2+) binding site. Cys122 lines the [2Fe-2S] cluster pocket. Mg(2+) contacts are provided by Asp123 and Lys124. Lys124 bears the N6-carboxylysine mark. Cys195 contacts [2Fe-2S] cluster. Glu491 contributes to the Mg(2+) binding site. The Proton acceptor role is filled by Ser517.

The protein belongs to the IlvD/Edd family. Homodimer. The cofactor is [2Fe-2S] cluster. Mg(2+) is required as a cofactor.

The catalysed reaction is (2R)-2,3-dihydroxy-3-methylbutanoate = 3-methyl-2-oxobutanoate + H2O. It carries out the reaction (2R,3R)-2,3-dihydroxy-3-methylpentanoate = (S)-3-methyl-2-oxopentanoate + H2O. The protein operates within amino-acid biosynthesis; L-isoleucine biosynthesis; L-isoleucine from 2-oxobutanoate: step 3/4. It functions in the pathway amino-acid biosynthesis; L-valine biosynthesis; L-valine from pyruvate: step 3/4. Functionally, functions in the biosynthesis of branched-chain amino acids. Catalyzes the dehydration of (2R,3R)-2,3-dihydroxy-3-methylpentanoate (2,3-dihydroxy-3-methylvalerate) into 2-oxo-3-methylpentanoate (2-oxo-3-methylvalerate) and of (2R)-2,3-dihydroxy-3-methylbutanoate (2,3-dihydroxyisovalerate) into 2-oxo-3-methylbutanoate (2-oxoisovalerate), the penultimate precursor to L-isoleucine and L-valine, respectively. In Vibrio parahaemolyticus serotype O3:K6 (strain RIMD 2210633), this protein is Dihydroxy-acid dehydratase.